The chain runs to 451 residues: Signal transduction histidine-protein kinase ArlS (451 aa).

A run of 2 helical transmembrane segments spans residues 11-31 (IIVTTMITFVTIFLFCLIIIF) and 156-176 (IIALAFGVIATIITATISYVF). The region spanning 178-231 (TQITKPLVSLSNKMIEIRRDGFQNKLQLNTNYEEIDNLANTFNEMMSQIEESFN) is the HAMP domain. The region spanning 239–451 (DASHELRTPL…NKGTTFKIIF (213 aa)) is the Histidine kinase domain. Phosphohistidine; by autocatalysis is present on His242.

In terms of processing, autophosphorylated.

It localises to the cell membrane. The enzyme catalyses ATP + protein L-histidine = ADP + protein N-phospho-L-histidine.. Functionally, member of the two-component regulatory system ArlS/ArlR involved in the regulation of adhesion, autolysis, multidrug resistance and virulence. ArlS probably functions as a sensor protein kinase which is autophosphorylated at a histidine residue and transfers its phosphate group to ArlR. The polypeptide is Signal transduction histidine-protein kinase ArlS (arlS) (Staphylococcus aureus (strain bovine RF122 / ET3-1)).